Consider the following 258-residue polypeptide: Eukaryotic translation initiation factor 3 subunit J (258 aa).

Low complexity predominate over residues 1–11; the sequence is MAAAAAAAGDS. The segment at 1 to 108 is disordered; the sequence is MAAAAAAAGD…LEEPEEPKVL (108 aa). A2 carries the post-translational modification N-acetylalanine. Residues 2–69 form a sufficient for interaction with EIF3B region; the sequence is AAAAAAAGDS…KEEAEVKPEV (68 aa). Phosphoserine occurs at positions 11, 13, and 20. Acidic residues predominate over residues 40-59; it reads EGEDEDEDVKDNWDDDDDEK. The span at 60 to 106 shows a compositional bias: basic and acidic residues; it reads KEEAEVKPEVKISEKKKIAEKIKEKERQQKKRQEEIKKRLEEPEEPK. Residues 70 to 135 adopt a coiled-coil conformation; that stretch reads KISEKKKIAE…ESDLELAKET (66 aa). K106 is covalently cross-linked (Glycyl lysine isopeptide (Lys-Gly) (interchain with G-Cter in SUMO2)). Position 109 is a phosphothreonine (T109). S127 bears the Phosphoserine mark. The tract at residues 217 to 238 is disordered; the sequence is SKAKKKKKGVVPGGGLKATMKD. Positions 243 to 258 are promotes stable association with the 40S ribosome; the sequence is YGGYDGGYVQDYEDFM. Y254 carries the phosphotyrosine modification.

In terms of assembly, component of the eukaryotic translation initiation factor 3 (eIF-3) complex, which is composed of 13 subunits: EIF3A, EIF3B, EIF3C, EIF3D, EIF3E, EIF3F, EIF3G, EIF3H, EIF3I, EIF3J, EIF3K, EIF3L and EIF3M. The eIF-3 complex appears to include 3 stable modules: module A is composed of EIF3A, EIF3B, EIF3G and EIF3I; module B is composed of EIF3F, EIF3H, and EIF3M; and module C is composed of EIF3C, EIF3D, EIF3E, EIF3K and EIF3L. EIF3C of module C binds EIF3B of module A and EIF3H of module B, thereby linking the three modules. EIF3J is a labile subunit that binds to the eIF-3 complex via EIF3B. The eIF-3 complex interacts with RPS6KB1 under conditions of nutrient depletion. Mitogenic stimulation leads to binding and activation of a complex composed of MTOR and RPTOR, leading to phosphorylation and release of RPS6KB1 and binding of EIF4B to eIF-3. In terms of processing, phosphorylated. Phosphorylation is enhanced upon serum stimulation.

The protein localises to the cytoplasm. Component of the eukaryotic translation initiation factor 3 (eIF-3) complex, which is required for several steps in the initiation of protein synthesis. The eIF-3 complex associates with the 40S ribosome and facilitates the recruitment of eIF-1, eIF-1A, eIF-2:GTP:methionyl-tRNAi and eIF-5 to form the 43S pre-initiation complex (43S PIC). The eIF-3 complex stimulates mRNA recruitment to the 43S PIC and scanning of the mRNA for AUG recognition. The eIF-3 complex is also required for disassembly and recycling of post-termination ribosomal complexes and subsequently prevents premature joining of the 40S and 60S ribosomal subunits prior to initiation. The eIF-3 complex specifically targets and initiates translation of a subset of mRNAs involved in cell proliferation, including cell cycling, differentiation and apoptosis, and uses different modes of RNA stem-loop binding to exert either translational activation or repression. The sequence is that of Eukaryotic translation initiation factor 3 subunit J from Homo sapiens (Human).